A 1883-amino-acid chain; its full sequence is DDB1- and CUL4-associated factor homolog 1 (1883 aa).

Disordered stretches follow at residues 1-47 (MDGQ…QSVE) and 309-340 (KPGD…HEGA). The segment covering 37 to 47 (NPEEGEEQSVE) has biased composition (acidic residues). The span at 309–322 (KPGDDNSVRDDPSR) shows a compositional bias: basic and acidic residues. Positions 323-334 (HRLNRSKSRGRG) are enriched in basic residues. Ser-349 carries the post-translational modification Phosphoserine. The disordered stretch occupies residues 882–924 (NKPPLAQNHQPVPGQATTRPSTDVAVGTQSTGNAPQTPVAPAS). A compositionally biased stretch (polar residues) spans 888–917 (QNHQPVPGQATTRPSTDVAVGTQSTGNAPQ). A LisH domain is found at 1087–1119 (DSKELLLLIHEHLQASGLGDTASALLKEAQLTP). Disordered stretches follow at residues 1157–1202 (TSKP…QWPS), 1214–1260 (PKIN…ALPQ), and 1310–1377 (SELR…NPER). Residues 1238–1251 (LTFSPSFSSQSRKQ) show a composition bias toward low complexity. Positions 1310 to 1329 (SELRDSSVPGKRIDLGERRN) are enriched in basic and acidic residues. A compositionally biased stretch (polar residues) spans 1330–1362 (STFADGSGLQTPASALDANQSGSSRLGQMTPAS). WD repeat units lie at residues 1464-1503 (DETA…MLES), 1506-1546 (GHQA…GGPR), 1548-1586 (SFDG…TCSP), 1587-1626 (CQKL…RRIP), and 1633-1671 (DQFT…VPSL). Short sequence motifs (DWD box) lie at residues 1619–1626 (VLWDRRIP) and 1655–1662 (EIWDMRTF). The disordered stretch occupies residues 1763–1883 (YEIGRRRPTD…DDYRDNIRSS (121 aa)). Composition is skewed to acidic residues over residues 1773–1796 (DDSD…EDDL) and 1808–1864 (DSGD…DGEM).

Belongs to the VPRBP/DCAF1 family. Component of the CUL4-RBX1-DDB1-DCAF1 E3 ubiquitin-protein ligase complex. Interacts with DDB1A through its DWD motifs. As to expression, ubiquitous but predominantly expressed in the inflorescence and roots.

Its subcellular location is the nucleus. It participates in protein modification; protein ubiquitination. Component of the CUL4-RBX1-DDB1-DCAF1 E3 ubiquitin-protein ligase complex, DCAF1 may function as the substrate recognition module within this complex. Appears to be required for plant embryogenesis and to affect several other developmental processes including leaf, shoot, and flower development. This chain is DDB1- and CUL4-associated factor homolog 1 (DCAF1), found in Arabidopsis thaliana (Mouse-ear cress).